The sequence spans 1285 residues: Peroxisomal ATPase PEX1 (1285 aa).

Over residues Q344–M353 the composition is skewed to polar residues. A disordered region spans residues Q344–D373. S354 carries the phosphoserine modification. A compositionally biased stretch (basic and acidic residues) spans P355–D373. ATP-binding positions include G601–S608 and G883–T890. Polar residues predominate over residues N1142–Q1161. The segment at N1142–D1162 is disordered. Phosphoserine is present on residues S1183, S1211, and S1213. The interval F1262 to A1285 is disordered.

It belongs to the AAA ATPase family. Homooligomer; homooligomerizes in the cytosol, interaction with PEX6 promotes dissociation of the homooligomer. Interacts with PEX6; forming the PEX1-PEX6 AAA ATPase complex, which is composed of a heterohexamer formed by a trimer of PEX1-PEX6 dimers. Interacts indirectly with PEX26, via its interaction with PEX6.

It localises to the cytoplasm. Its subcellular location is the cytosol. It is found in the peroxisome membrane. The catalysed reaction is ATP + H2O = ADP + phosphate + H(+). Component of the PEX1-PEX6 AAA ATPase complex, a protein dislocase complex that mediates the ATP-dependent extraction of the PEX5 receptor from peroxisomal membranes, an essential step for PEX5 recycling. Specifically recognizes PEX5 monoubiquitinated at 'Cys-11', and pulls it out of the peroxisome lumen through the PEX2-PEX10-PEX12 retrotranslocation channel. Extraction by the PEX1-PEX6 AAA ATPase complex is accompanied by unfolding of the TPR repeats and release of bound cargo from PEX5. This chain is Peroxisomal ATPase PEX1, found in Cricetulus griseus (Chinese hamster).